Here is a 164-residue protein sequence, read N- to C-terminus: UPF0303 protein RHE_CH02903 (164 aa).

Belongs to the UPF0303 family.

This Rhizobium etli (strain ATCC 51251 / DSM 11541 / JCM 21823 / NBRC 15573 / CFN 42) protein is UPF0303 protein RHE_CH02903.